We begin with the raw amino-acid sequence, 387 residues long: Dual specificity protein phosphatase MPK-4 (387 aa).

Positions 1–15 are enriched in polar residues; that stretch reads MEQSQSQRQAWPSSS. The disordered stretch occupies residues 1-27; sequence MEQSQSQRQAWPSSSAGGGKAQDSGVL. The Tyrosine-protein phosphatase domain maps to 35–182; that stretch reads GPVSIDEVDT…LKLFRRMGCK (148 aa). Cys-126 acts as the Phosphocysteine intermediate in catalysis. The interval 248-267 is disordered; it reads LEHKPRDRPPQEVVPKEKEE.

This sequence belongs to the protein-tyrosine phosphatase family. Non-receptor class dual specificity subfamily. As to quaternary structure, interacts (via tyrosine-protein phosphatase domain) with bsk/JNK; the interaction dephosphorylates bsk.

The protein resides in the nucleus. It localises to the cytoplasm. The enzyme catalyses O-phospho-L-tyrosyl-[protein] + H2O = L-tyrosyl-[protein] + phosphate. It carries out the reaction O-phospho-L-seryl-[protein] + H2O = L-seryl-[protein] + phosphate. The catalysed reaction is O-phospho-L-threonyl-[protein] + H2O = L-threonyl-[protein] + phosphate. With respect to regulation, inhibited by the tyrosine phosphatase inhibitor sodium vanadate. Dual specificity phosphatase; can dephosphorylate both phosphotyrosine and phosphoserine or phosphothreonine residues. May suppress bsk/JNK activation during the immune response. The sequence is that of Dual specificity protein phosphatase MPK-4 from Drosophila melanogaster (Fruit fly).